A 391-amino-acid polypeptide reads, in one-letter code: Ferrochelatase (391 aa).

Residues His196 and Glu281 each contribute to the Fe cation site.

This sequence belongs to the ferrochelatase family.

The protein resides in the cytoplasm. It catalyses the reaction heme b + 2 H(+) = protoporphyrin IX + Fe(2+). It functions in the pathway porphyrin-containing compound metabolism; protoheme biosynthesis; protoheme from protoporphyrin-IX: step 1/1. Functionally, catalyzes the ferrous insertion into protoporphyrin IX. The chain is Ferrochelatase from Prochlorococcus marinus (strain MIT 9211).